Here is a 251-residue protein sequence, read N- to C-terminus: MKTGILLSLCYDGSNYHGWINQTNAISIQTTLNKAIKKVIKTGQFKTIGASKTDTNVHALDQKVLLIIYFTPILEKFIKAINKALPSDIKILDAKFVDPNFNIREVEYKIYHYYINDHQFDIFTNRYEYFWKHQKIDIIKLQEIFNLFIGEHEFKLFSGLKENEWNQYQTKRTIDDIKVLRINNKVVIQFKASGFIRYQIRIIIANCLNAYLNHKISTTKLVEMLQGIGKKTPFIIDAKGLVLQKIQFNKN.

The Nucleophile role is filled by Asp54. Tyr111 serves as a coordination point for substrate.

The protein belongs to the tRNA pseudouridine synthase TruA family. As to quaternary structure, homodimer.

It carries out the reaction uridine(38/39/40) in tRNA = pseudouridine(38/39/40) in tRNA. In terms of biological role, formation of pseudouridine at positions 38, 39 and 40 in the anticodon stem and loop of transfer RNAs. The sequence is that of tRNA pseudouridine synthase A from Mycoplasma mycoides subsp. mycoides SC (strain CCUG 32753 / NCTC 10114 / PG1).